The primary structure comprises 105 residues: Large ribosomal subunit protein bL21 (105 aa).

This sequence belongs to the bacterial ribosomal protein bL21 family. Part of the 50S ribosomal subunit. Contacts protein L20.

This protein binds to 23S rRNA in the presence of protein L20. In Thermotoga maritima (strain ATCC 43589 / DSM 3109 / JCM 10099 / NBRC 100826 / MSB8), this protein is Large ribosomal subunit protein bL21.